The following is a 146-amino-acid chain: Hemoglobin subunit beta (146 aa).

V1 is modified (N-acetylvaline). Residues 2–146 (HMTDAEKKLV…VANALAHKYH (145 aa)) enclose the Globin domain. The residue at position 12 (T12) is a Phosphothreonine. An N6-acetyllysine modification is found at K59. H63 lines the heme b pocket. N6-acetyllysine is present on K82. A heme b-binding site is contributed by H92. C93 is subject to S-nitrosocysteine. K144 carries the post-translational modification N6-acetyllysine.

The protein belongs to the globin family. Tetramer of two alpha and two different beta chains. Two external cysteine residues at beta-16 and beta-52 cause reversible polymerization to octamers and most likely irreversible formation of higher polymers. As to expression, red blood cells.

Involved in oxygen transport from the lung to the various peripheral tissues. The polypeptide is Hemoglobin subunit beta (HBB) (Echinops telfairi (Lesser hedgehog tenrec)).